The following is a 331-amino-acid chain: 6-phosphogluconolactonase (331 aa).

This sequence belongs to the cycloisomerase 2 family.

It catalyses the reaction 6-phospho-D-glucono-1,5-lactone + H2O = 6-phospho-D-gluconate + H(+). It functions in the pathway carbohydrate degradation; pentose phosphate pathway; D-ribulose 5-phosphate from D-glucose 6-phosphate (oxidative stage): step 2/3. Its function is as follows. Catalyzes the hydrolysis of 6-phosphogluconolactone to 6-phosphogluconate. This chain is 6-phosphogluconolactonase, found in Sodalis glossinidius (strain morsitans).